A 374-amino-acid polypeptide reads, in one-letter code: C-C chemokine receptor type 2 (374 aa).

Residues 1–42 (MLSTSRSRFIRNTNESGEEVTTFFDYDYGAPCHKFDVKQIGA) lie on the Extracellular side of the membrane. The N-linked (GlcNAc...) asparagine glycan is linked to asparagine 14. A Sulfotyrosine modification is found at tyrosine 26. A helical membrane pass occupies residues 43 to 70 (QLLPPLYSLVFIFGFVGNMLVVLILINC). Topologically, residues 71–80 (KKLKCLTDIY) are cytoplasmic. Residues 81 to 100 (LLNLAISDLLFLITLPLWAH) traverse the membrane as a helical segment. The Extracellular portion of the chain corresponds to 101–114 (SAANEWVFGNAMCK). Cysteine 113 and cysteine 190 are oxidised to a cystine. The helical transmembrane segment at 115–136 (LFTGLYHIGYFGGIFFIILLTI) threads the bilayer. The Cytoplasmic portion of the chain corresponds to 137–153 (DRYLAIVHAVFALKART). Position 139 is a phosphotyrosine; by JAK2 (tyrosine 139). Residues 154–178 (VTFGVVTSVITWLVAVFASVPGIIF) form a helical membrane-spanning segment. The Extracellular segment spans residues 179-206 (TKCQKEDSVYVCGPYFPRGWNNFHTIMR). A helical membrane pass occupies residues 207-226 (NILGLVLPLLIMVICYSGIL). The Cytoplasmic segment spans residues 227 to 243 (KTLLRCRNEKKRHRAVR). Residues 244 to 268 (VIFTIMIVYFLFWTPYNIVILLNTF) form a helical membrane-spanning segment. The Extracellular segment spans residues 269–285 (QEFFGLSNCESTSQLDQ). A helical transmembrane segment spans residues 286-309 (ATQVTETLGMTHCCINPIIYAFVG). Topologically, residues 310–374 (EKFRSLFHIA…EASLQDKEGA (65 aa)) are cytoplasmic. A disordered region spans residues 348–374 (QGLLDGRGKGKSIGRAPEASLQDKEGA).

The protein belongs to the G-protein coupled receptor 1 family. As to quaternary structure, interacts with ARRB1. Interacts (via extracellular N-terminal region) with beta-defensin DEFB106A/DEFB106B; this interaction may preferentially require specific tyrosine sulfation on CCR2. Interacts with NUP85; the interaction is required for CCR2 clusters formation on the cell membrane and CCR2 signaling. In terms of assembly, (Microbial infection) Binds to HIV-1 Tat. Post-translationally, N-glycosylated. In terms of processing, sulfation increases the affinity for both monomeric and dimeric CCL2 with stronger binding to the monomeric form. Binding of sulfated CCR2 to CCL2 promotes conversion of CCL2 from dimer to monomer. Expressed by monocytes and IL2-activated NK cells. Abundantly expressed on CD14+/CD16- monocytes and weakly on CD14+/CD16+ monocytes, type 2 dendritic cells (DCs) and plasmacytoid DCs (at protein level).

The protein resides in the cell membrane. Key functional receptor for CCL2 but can also bind CCL7, and CCL12. Also transduces signaling mediated by CCL13. Its binding with CCL2 on monocytes and macrophages mediates chemotaxis and migration induction through the activation of the PI3K cascade, the small G protein Rac and lamellipodium protrusion. Also acts as a receptor for the beta-defensin DEFB106A/DEFB106B. Regulates the expression of T-cell inflammatory cytokines and T-cell differentiation, promoting the differentiation of T-cells into T-helper 17 cells (Th17) during inflammation. Facilitates the export of mature thymocytes by enhancing directional movement of thymocytes to sphingosine-1-phosphate stimulation and up-regulation of S1P1R expression; signals through the JAK-STAT pathway to regulate FOXO1 activity leading to an increased expression of S1P1R. Plays an important role in mediating peripheral nerve injury-induced neuropathic pain. Increases NMDA-mediated synaptic transmission in both dopamine D1 and D2 receptor-containing neurons, which may be caused by MAPK/ERK-dependent phosphorylation of GRIN2B/NMDAR2B. Mediates the recruitment of macrophages and monocytes to the injury site following brain injury. Functionally, (Microbial infection) Alternative coreceptor with CD4 for HIV-1 infection. This is C-C chemokine receptor type 2 (CCR2) from Homo sapiens (Human).